The following is a 119-amino-acid chain: Flagellar transcriptional regulator FlhD (119 aa).

This sequence belongs to the FlhD family. In terms of assembly, homodimer; disulfide-linked. Forms a heterohexamer composed of two FlhC and four FlhD subunits. Each FlhC binds a FlhD dimer, forming a heterotrimer, and a hexamer assembles by dimerization of two heterotrimers.

Its subcellular location is the cytoplasm. Functionally, functions in complex with FlhC as a master transcriptional regulator that regulates transcription of several flagellar and non-flagellar operons by binding to their promoter region. Activates expression of class 2 flagellar genes, including fliA, which is a flagellum-specific sigma factor that turns on the class 3 genes. Also regulates genes whose products function in a variety of physiological pathways. This chain is Flagellar transcriptional regulator FlhD, found in Pectobacterium atrosepticum (strain SCRI 1043 / ATCC BAA-672) (Erwinia carotovora subsp. atroseptica).